Reading from the N-terminus, the 299-residue chain is Bifunctional protein FolD (299 aa).

Residues 168–170, Ser193, and Ile234 contribute to the NADP(+) site; that span reads GRS.

It belongs to the tetrahydrofolate dehydrogenase/cyclohydrolase family. As to quaternary structure, homodimer.

It carries out the reaction (6R)-5,10-methylene-5,6,7,8-tetrahydrofolate + NADP(+) = (6R)-5,10-methenyltetrahydrofolate + NADPH. It catalyses the reaction (6R)-5,10-methenyltetrahydrofolate + H2O = (6R)-10-formyltetrahydrofolate + H(+). Its pathway is one-carbon metabolism; tetrahydrofolate interconversion. Its function is as follows. Catalyzes the oxidation of 5,10-methylenetetrahydrofolate to 5,10-methenyltetrahydrofolate and then the hydrolysis of 5,10-methenyltetrahydrofolate to 10-formyltetrahydrofolate. The polypeptide is Bifunctional protein FolD (Brucella abortus (strain S19)).